Consider the following 730-residue polypeptide: Catalase-peroxidase (730 aa).

The tract at residues 1 to 21 (MTENKCPVTGKMSKATAGSGT) is disordered. A cross-link (tryptophyl-tyrosyl-methioninium (Trp-Tyr) (with M-244)) is located at residues 95 to 218 (WHSAGTYRVG…LAAVQMGLIY (124 aa)). H96 acts as the Proton acceptor in catalysis. Residues 218-244 (YVNPEGPNGNPDPLGSAHDVRETFARM) constitute a cross-link (tryptophyl-tyrosyl-methioninium (Tyr-Met) (with W-95)). H259 contributes to the heme b binding site.

The protein belongs to the peroxidase family. Peroxidase/catalase subfamily. As to quaternary structure, homodimer or homotetramer. Heme b serves as cofactor. Post-translationally, formation of the three residue Trp-Tyr-Met cross-link is important for the catalase, but not the peroxidase activity of the enzyme.

The enzyme catalyses H2O2 + AH2 = A + 2 H2O. It catalyses the reaction 2 H2O2 = O2 + 2 H2O. Functionally, bifunctional enzyme with both catalase and broad-spectrum peroxidase activity. The polypeptide is Catalase-peroxidase (Clostridium botulinum (strain Alaska E43 / Type E3)).